Here is a 39-residue protein sequence, read N- to C-terminus: Photosystem II reaction center protein Psb30 (39 aa).

Residues Ile12–Leu32 traverse the membrane as a helical segment.

The protein belongs to the Psb30/Ycf12 family. In terms of assembly, PSII is composed of 1 copy each of membrane proteins PsbA, PsbB, PsbC, PsbD, PsbE, PsbF, PsbH, PsbI, PsbJ, PsbK, PsbL, PsbM, PsbT, PsbX, PsbY, PsbZ, Psb30/Ycf12, peripheral proteins PsbO, CyanoQ (PsbQ), PsbU, PsbV and a large number of cofactors. It forms dimeric complexes.

It localises to the cellular thylakoid membrane. A core subunit of photosystem II (PSII), probably helps stabilize the reaction center. The polypeptide is Photosystem II reaction center protein Psb30 (Rippkaea orientalis (strain PCC 8801 / RF-1) (Cyanothece sp. (strain PCC 8801))).